A 176-amino-acid chain; its full sequence is Peptidoglycan-associated lipoprotein (176 aa).

Positions 1–21 (MKAGSFYKLGLLVASAVLVAA) are cleaved as a signal peptide. C22 carries N-palmitoyl cysteine lipidation. The S-diacylglycerol cysteine moiety is linked to residue C22. Residues 60–176 (YTTQAPHNQL…RVEFIYEATR (117 aa)) form the OmpA-like domain.

It belongs to the Pal lipoprotein family. As to quaternary structure, the Tol-Pal system is composed of five core proteins: the inner membrane proteins TolA, TolQ and TolR, the periplasmic protein TolB and the outer membrane protein Pal. They form a network linking the inner and outer membranes and the peptidoglycan layer.

The protein localises to the cell outer membrane. Functionally, part of the Tol-Pal system, which plays a role in outer membrane invagination during cell division and is important for maintaining outer membrane integrity. Very strongly associated with the peptidoglycan. The sequence is that of Peptidoglycan-associated lipoprotein from Legionella pneumophila.